The primary structure comprises 428 residues: Chaperone SurA (428 aa).

The first 13 residues, 1-13, serve as a signal peptide directing secretion; sequence MLGALLLSGAVHA. PpiC domains lie at 164-265 and 276-375; these read SEEF…KLLE and RDEV…EVLG.

Its subcellular location is the periplasm. The enzyme catalyses [protein]-peptidylproline (omega=180) = [protein]-peptidylproline (omega=0). In terms of biological role, chaperone involved in the correct folding and assembly of outer membrane proteins. Recognizes specific patterns of aromatic residues and the orientation of their side chains, which are found more frequently in integral outer membrane proteins. May act in both early periplasmic and late outer membrane-associated steps of protein maturation. In Pseudomonas savastanoi pv. phaseolicola (strain 1448A / Race 6) (Pseudomonas syringae pv. phaseolicola (strain 1448A / Race 6)), this protein is Chaperone SurA.